Consider the following 417-residue polypeptide: E3 ubiquitin-protein ligase RNF135 (417 aa).

Residues 21-67 (CIICQGLLDQPTTLPCGHSFCLRCLHDLWVSKRGAVDGCPWACPICR) form an RING-type zinc finger. Disordered stretches follow at residues 95–118 (EVEAGSEPEPAPAPRSAPQVTVQK) and 143–173 (TQRPNLGSGQDNAQGTPPTDSSSEGEHSLDS). 2 coiled-coil regions span residues 121 to 145 (TNVIQELTDMVRQLVDDVKSLQTQR) and 180 to 204 (SISQKKIQEILHNLEEIQEKLQGSV). The segment covering 143–164 (TQRPNLGSGQDNAQGTPPTDSS) has biased composition (polar residues). The 193-residue stretch at 225-417 (PDQRRPAPRK…NYLEIKQLNT (193 aa)) folds into the B30.2/SPRY domain.

In terms of assembly, homodimer. Interacts (homodimer) with RIGI (double-stranded RNA-bound oligomeric form); involved in both RIGI ubiquitination, oligomerization into filaments associated with viral RNAs and the bridging of these filaments. Interacts with UBE2D3 and UBE2N; E2 ubiquitin ligases involved in RNF135-mediated ubiquitination of RIGI and activation of the RIG-I signaling pathway. Interacts with PCBP2. As to expression, ubiquitously expressed.

It localises to the cytoplasm. The protein localises to the stress granule. The catalysed reaction is S-ubiquitinyl-[E2 ubiquitin-conjugating enzyme]-L-cysteine + [acceptor protein]-L-lysine = [E2 ubiquitin-conjugating enzyme]-L-cysteine + N(6)-ubiquitinyl-[acceptor protein]-L-lysine.. Its pathway is protein modification; protein ubiquitination. Its function is as follows. E2-dependent E3 ubiquitin-protein ligase that functions as a RIGI coreceptor in the sensing of viral RNAs in cell cytoplasm and the activation of the antiviral innate immune response. Together with the UBE2D3, UBE2N and UB2V1 E2 ligases, catalyzes the 'Lys-63'-linked polyubiquitination of RIGI oligomerized on viral RNAs, an essential step in the activation of the RIG-I signaling pathway. Through a ubiquitin-independent parallel mechanism, which consists in bridging RIGI filaments forming on longer viral RNAs, further activates the RIG-I signaling pathway. This second mechanism that synergizes with the ubiquitin-dependent one would thereby allow an RNA length-dependent regulation of the RIG-I signaling pathway. Associated with the E2 ligase UBE2N, also constitutively synthesizes unanchored 'Lys-63'-linked polyubiquitin chains that may also activate the RIG-I signaling pathway. It is not involved in the innate immune response against DNA viruses. The sequence is that of E3 ubiquitin-protein ligase RNF135 from Mus musculus (Mouse).